Here is a 697-residue protein sequence, read N- to C-terminus: Elongation factor G (697 aa).

One can recognise a tr-type G domain in the interval 8 to 287; that stretch reads ERVRNIGIAA…AVVDYLPAPT (280 aa). GTP-binding positions include 17-24, 81-85, and 135-138; these read AHIDAGKT, DTPGH, and NKMD.

It belongs to the TRAFAC class translation factor GTPase superfamily. Classic translation factor GTPase family. EF-G/EF-2 subfamily.

It is found in the cytoplasm. Catalyzes the GTP-dependent ribosomal translocation step during translation elongation. During this step, the ribosome changes from the pre-translocational (PRE) to the post-translocational (POST) state as the newly formed A-site-bound peptidyl-tRNA and P-site-bound deacylated tRNA move to the P and E sites, respectively. Catalyzes the coordinated movement of the two tRNA molecules, the mRNA and conformational changes in the ribosome. The sequence is that of Elongation factor G (fusA) from Arthrospira platensis (Spirulina platensis).